Reading from the N-terminus, the 438-residue chain is L-fucose-proton symporter (438 aa).

At 2-26 the chain is on the cytoplasmic side; sequence GNTSIQTQSYRAVDKDAGQSRSYII. A helical membrane pass occupies residues 27–53; sequence PFALLCSLFFLWAVANNLNDILLPQFQ. Residues 54-61 are Periplasmic-facing; sequence QAFTLTNF. A helical transmembrane segment spans residues 62–87; the sequence is QAGLIQSAFYFGYFIIPIPAGILMKK. The Cytoplasmic segment spans residues 88 to 90; it reads LSY. A helical transmembrane segment spans residues 91-113; that stretch reads KAGIITGLFLYALGAALFWPAAE. Residues 114 to 117 lie on the Periplasmic side of the membrane; it reads IMNY. The helical transmembrane segment at 118 to 144 threads the bilayer; that stretch reads TLFLVGLFIIAAGLGCLETAANPFVTV. The Cytoplasmic segment spans residues 145–150; the sequence is LGPESS. A helical membrane pass occupies residues 151 to 178; sequence GHFRLNLAQTFNSFGAIIAVVFGQSLIL. At 179–193 the chain is on the periplasmic side; that stretch reads SNVPHQSQDVLDKMS. The helical transmembrane segment at 194 to 227 threads the bilayer; the sequence is PEQLSAYKHSLVLSVQTPYMIIVAIVLLVALLIM. Topologically, residues 228–257 are cytoplasmic; sequence LTKFPALQSDNHSDAKQGSFSASLSRLARI. A helical membrane pass occupies residues 258 to 287; the sequence is RHWRWAVLAQFCYVGAQTACWSYLIRYAVE. The Periplasmic portion of the chain corresponds to 288-293; sequence EIPGMT. A helical membrane pass occupies residues 294-319; it reads AGFAANYLTGTMVCFFIGRFTGTWLI. At 320–324 the chain is on the cytoplasmic side; sequence SRFAP. A helical transmembrane segment spans residues 325 to 343; that stretch reads HKVLAAYALIAMALCLISA. The Periplasmic portion of the chain corresponds to 344–347; that stretch reads FAGG. The helical transmembrane segment at 348–372 threads the bilayer; the sequence is HVGLIALTLCSAFMSIQYPTIFSLG. At 373 to 379 the chain is on the cytoplasmic side; sequence IKNLGQD. The helical transmembrane segment at 380–407 threads the bilayer; that stretch reads TKYGSSFIVMTIIGGGIVTPVMGFVSDA. At 408 to 410 the chain is on the periplasmic side; that stretch reads AGN. The chain crosses the membrane as a helical span at residues 411–430; it reads IPTAELIPALCFAVIFIFAR. The Cytoplasmic segment spans residues 431–438; that stretch reads FRSQTATN.

The protein belongs to the major facilitator superfamily. FHS transporter (TC 2.A.1.7) family.

The protein resides in the cell inner membrane. It catalyses the reaction L-fucose(in) + H(+)(in) = L-fucose(out) + H(+)(out). The catalysed reaction is D-arabinose(out) + H(+)(out) = D-arabinose(in) + H(+)(in). It carries out the reaction L-galactose(out) + H(+)(out) = L-galactose(in) + H(+)(in). Functionally, mediates the uptake of L-fucose across the boundary membrane with the concomitant transport of protons into the cell (symport system). Can also transport L-galactose and D-arabinose, but at reduced rates compared with L-fucose. Is not able to transport L-rhamnose and L-arabinose. Binds D-arabinose with the highest affinity, followed by L-fucose, and then by L-galactose. The polypeptide is L-fucose-proton symporter (fucP) (Escherichia coli (strain K12)).